Here is a 153-residue protein sequence, read N- to C-terminus: NAD(P)H-quinone oxidoreductase subunit N (153 aa).

The protein belongs to the complex I NdhN subunit family. NDH-1 can be composed of about 15 different subunits; different subcomplexes with different compositions have been identified which probably have different functions.

It is found in the cellular thylakoid membrane. It catalyses the reaction a plastoquinone + NADH + (n+1) H(+)(in) = a plastoquinol + NAD(+) + n H(+)(out). It carries out the reaction a plastoquinone + NADPH + (n+1) H(+)(in) = a plastoquinol + NADP(+) + n H(+)(out). Its function is as follows. NDH-1 shuttles electrons from an unknown electron donor, via FMN and iron-sulfur (Fe-S) centers, to quinones in the respiratory and/or the photosynthetic chain. The immediate electron acceptor for the enzyme in this species is believed to be plastoquinone. Couples the redox reaction to proton translocation, and thus conserves the redox energy in a proton gradient. Cyanobacterial NDH-1 also plays a role in inorganic carbon-concentration. The sequence is that of NAD(P)H-quinone oxidoreductase subunit N from Synechococcus sp. (strain CC9605).